We begin with the raw amino-acid sequence, 490 residues long: Vacuolar amino acid transporter 7 (490 aa).

Residues 1-6 (MEATSS) lie on the Cytoplasmic side of the membrane. A helical membrane pass occupies residues 7 to 27 (ALSSTANLVKTIVGAGTLAIP). Residues 28-34 (YSFKSDG) are Vacuolar-facing. Residues 35 to 55 (VLVGVILTLLAAVTSGLGLFV) traverse the membrane as a helical segment. The Cytoplasmic portion of the chain corresponds to 56–84 (LSKCSKTLINPRNSSFFTLCMLTYPTLAP). A helical transmembrane segment spans residues 85-105 (IFDLAMIVQCFGVGLSYLVLI). Topologically, residues 106-108 (GDL) are vacuolar. The helical transmembrane segment at 109–129 (FPGLFGGERNYWIIASAVIII) threads the bilayer. At 130–143 (PLCLVKKLDQLKYS) the chain is on the cytoplasmic side. Residues 144–164 (SILGLFALAYISILVFSHFVF) form a helical membrane-spanning segment. The Vacuolar segment spans residues 165-190 (ELGKGELTNILRNDICWWKIHDFKGL). Residues 191–211 (LSTFSIIIFAFTGSMNLFPMI) traverse the membrane as a helical segment. The Cytoplasmic segment spans residues 212 to 221 (NELKDNSMEN). Residues 222-242 (ITFVINNSISLSTALFLIVGL) traverse the membrane as a helical segment. Over 243–264 (SGYLTFGNETLGNLMLNYDPNS) the chain is Vacuolar. Residues 265-285 (IWIVIGKFCLGSMLILSFPLL) form a helical membrane-spanning segment. Topologically, residues 286 to 397 (FHPLRIAVNN…FVKSRFYWIT (112 aa)) are cytoplasmic. A disordered region spans residues 355–374 (NGNFDNGSIESQENNNDERG). The segment covering 357–368 (NFDNGSIESQEN) has biased composition (polar residues). The chain crosses the membrane as a helical span at residues 398 to 418 (ALLLISMYTLALSVQSFALVL). Residues 419 to 428 (SFVGATGSTS) lie on the Vacuolar side of the membrane. A helical transmembrane segment spans residues 429–449 (ISFTLPGLLGYKLIGLDSLAI). Residues 450 to 463 (GKMIPPKDRFYKRC) lie on the Cytoplasmic side of the membrane. Residues 464-484 (SLLLVFYGLSVMFLSLYVTVF) traverse the membrane as a helical segment. Residues 485–490 (NRSDEA) are Vacuolar-facing.

It belongs to the amino acid/polyamine transporter 2 family.

Its subcellular location is the vacuole membrane. Functionally, probable amino acid transporter of unknown specificity. This Saccharomyces cerevisiae (strain ATCC 204508 / S288c) (Baker's yeast) protein is Vacuolar amino acid transporter 7 (AVT7).